The primary structure comprises 203 residues: Secreted RxLR effector protein RXLR-C28 (203 aa).

The N-terminal stretch at 1 to 24 is a signal peptide; the sequence is MKAVKLTAAVVVLFMAPYVPITSS. N32 carries an N-linked (GlcNAc...) asparagine glycan. Residues 37 to 40 carry the RxLR motif; the sequence is RHLR. A glycan (N-linked (GlcNAc...) asparagine) is linked at N193.

Belongs to the RxLR effector family.

The protein localises to the secreted. It localises to the host cytoplasm. Functionally, secreted effector that does not suppress pattern-triggered immunity (PTI) in plant host. The protein is Secreted RxLR effector protein RXLR-C28 of Plasmopara halstedii (Downy mildew of sunflower).